A 183-amino-acid chain; its full sequence is Caspase recruitment domain-containing protein 19 (183 aa).

A disulfide bridge links Cys-7 with Cys-77. Residues Asp-8 to His-99 enclose the CARD domain. The chain crosses the membrane as a helical span at residues Gly-122 to Cys-142.

Associates with BCL10 by CARD-CARD interaction.

The protein resides in the endoplasmic reticulum membrane. The protein localises to the mitochondrion membrane. In terms of biological role, plays a role in inhibiting the effects of BCL10-induced activation of NF-kappa-B. May inhibit the phosphorylation of BCL10 in a CARD-dependent manner. In Bos taurus (Bovine), this protein is Caspase recruitment domain-containing protein 19 (CARD19).